The chain runs to 315 residues: Adenine deaminase (315 aa).

Zn(2+) contacts are provided by His14, His16, and His194. Catalysis depends on Glu197, which acts as the Proton donor. Position 275 (Asp275) interacts with Zn(2+). Asp276 lines the substrate pocket.

Belongs to the metallo-dependent hydrolases superfamily. Adenosine and AMP deaminases family. Adenine deaminase type 2 subfamily. Zn(2+) serves as cofactor.

It carries out the reaction adenine + H2O + H(+) = hypoxanthine + NH4(+). Functionally, catalyzes the hydrolytic deamination of adenine to hypoxanthine. Plays an important role in the purine salvage pathway and in nitrogen catabolism. The polypeptide is Adenine deaminase (Pseudomonas putida (strain GB-1)).